The primary structure comprises 350 residues: MLKKINKIKDQFISDLNKVKTIEEAEKLKKSLLGKESELSEILKSLKDSDTNDKQAIGIASHELRTFIASTIDEFVARIKKEALDAKLASEKIDVSLTGTLARFGTKHPLNIVVEEITQIFTEIGFDVLNGNDVESDEYCFQKLNLPVGHPARDMQDTFYIDEETVLSTHCTHMTARVLTQMAKDENFEGNYACVAIGNVYRRDDDDATHSHQFMQLDLLCIGKKITFANLKWVLKYMCKRLFGEEVNIRLRPSLFPFTEPSVEVDVSCFKCSGKGCSICKYSGWIEILGSGIINEQVMLLNGMDPEKNTALAFGAGIERIAMLKFGISNIRNLYENNVQFLEQFKFYGE.

Position 260 (Glu-260) interacts with Mg(2+).

This sequence belongs to the class-II aminoacyl-tRNA synthetase family. Phe-tRNA synthetase alpha subunit type 1 subfamily. As to quaternary structure, tetramer of two alpha and two beta subunits. Mg(2+) is required as a cofactor.

The protein resides in the cytoplasm. It catalyses the reaction tRNA(Phe) + L-phenylalanine + ATP = L-phenylalanyl-tRNA(Phe) + AMP + diphosphate + H(+). The sequence is that of Phenylalanine--tRNA ligase alpha subunit from Mesoplasma florum (strain ATCC 33453 / NBRC 100688 / NCTC 11704 / L1) (Acholeplasma florum).